A 189-amino-acid chain; its full sequence is Protein jagunal homolog (189 aa).

Over 1–34 the chain is Cytoplasmic; the sequence is MSSRGVRAAGTDGTDFQNRQRVAQHYQESAQYKS. A helical membrane pass occupies residues 35-55; it reads ILKWFFVPHFLILVFMWLKVG. Topologically, residues 56–78 are lumenal; that stretch reads SELLRTNFGWKNAFFDRLDMPSA. Residues 79-99 traverse the membrane as a helical segment; it reads YPWEYVWCFSFIPIVLAIYSF. The Cytoplasmic segment spans residues 100–105; that stretch reads QRNKLK. Residues 106–126 traverse the membrane as a helical segment; the sequence is ILHYAYYAEFVVGIFPCMIGL. Topologically, residues 127 to 150 are lumenal; that stretch reads GGQLPELMEYAQDMEGSNTPTFKG. Residues 151 to 171 traverse the membrane as a helical segment; sequence IFPMVIIWYIFFAVALQIHGF. At 172-189 the chain is on the cytoplasmic side; that stretch reads SMYFMHHLAAAWAPVKRD.

Belongs to the jagunal family.

The protein resides in the endoplasmic reticulum membrane. This is Protein jagunal homolog from Caenorhabditis elegans.